Here is a 291-residue protein sequence, read N- to C-terminus: Protease HtpX homolog (291 aa).

2 helical membrane-spanning segments follow: residues 4–24 (VVLF…SARI) and 38–58 (MGML…ISLL). Residue H144 participates in Zn(2+) binding. Residue E145 is part of the active site. H148 provides a ligand contact to Zn(2+). 2 helical membrane-spanning segments follow: residues 152–172 (GDMV…IFLS) and 199–219 (ISSI…VMCF). Position 224 (E224) interacts with Zn(2+).

It belongs to the peptidase M48B family. Zn(2+) is required as a cofactor.

It is found in the cell inner membrane. The chain is Protease HtpX homolog from Chlorobium limicola (strain DSM 245 / NBRC 103803 / 6330).